We begin with the raw amino-acid sequence, 448 residues long: Trigger factor (448 aa).

Positions 163–248 (GDIVVIDFDG…VKDIRVPKAA (86 aa)) constitute a PPIase FKBP-type domain.

This sequence belongs to the FKBP-type PPIase family. Tig subfamily.

It localises to the cytoplasm. It catalyses the reaction [protein]-peptidylproline (omega=180) = [protein]-peptidylproline (omega=0). Involved in protein export. Acts as a chaperone by maintaining the newly synthesized protein in an open conformation. Functions as a peptidyl-prolyl cis-trans isomerase. The sequence is that of Trigger factor from Rhodospirillum centenum (strain ATCC 51521 / SW).